Consider the following 603-residue polypeptide: Nuclear receptor subfamily 2 group C member 1 (603 aa).

The required for interaction with KAT2B stretch occupies residues 1–178 (MATIEEIAHQ…RLQRCIAFGM (178 aa)). A DNA-binding region (nuclear receptor) is located at residues 110–185 (FDLCVVCGDK…FGMKQDSVQC (76 aa)). 2 consecutive NR C4-type zinc fingers follow at residues 113-133 (CVVC…CEGC) and 149-168 (CRGS…CQYC). 2 positions are modified to phosphoserine: Ser197 and Ser215. Residue Thr220 is modified to Phosphothreonine. A Phosphothreonine; by MAPK1 modification is found at Thr222. Lys250 is covalently cross-linked (Glycyl lysine isopeptide (Lys-Gly) (interchain with G-Cter in SUMO); alternate). Lys250 participates in a covalent cross-link: Glycyl lysine isopeptide (Lys-Gly) (interchain with G-Cter in SUMO2); alternate. In terms of domain architecture, NR LBD spans 348–590 (GSVHLITGDS…SVIPHILKME (243 aa)). Phosphoserine; by PKC is present on Ser581. The interval 584–603 (PHILKMEPADYNSQIIGHSI) is required for interaction with NRIP1. Residue Lys588 forms a Glycyl lysine isopeptide (Lys-Gly) (interchain with G-Cter in SUMO2) linkage.

This sequence belongs to the nuclear hormone receptor family. NR2 subfamily. As to quaternary structure, homodimer. Heterodimer; binds DNA as a heterodimer with NR2C2 required for chromatin remodeling and for binding to promoter regions such as globin DR1 repeats. Interacts with ESR1; the interaction prevents homodimerization of ESR1 and suppresses its transcriptional activity and cell growth. Interacts with NRIP1 (via its LXXLL motifs); the interaction provides corepressor activity. Interacts with HDAC3 (via the DNA-binding domain). Interacts with HDAC4 (via the DNA-binding domain). Interacts with PIAS1; the interaction is required for sumoylation of NR2C1. Interacts with UBE2I; the interaction is required for sumoylation of NR2C1. Interacts with KAT2B; the interaction acts as a corepressor of gene expression. Post-translationally, sumoylation requires both PIAS1 and UBE2I. Sumoylation appears to dissociate NR2C1 from the PML nuclear bodies. Enhances the interaction with NRIP1 but inhibits interaction with KAT2B. In proliferating cells, stimulation by all-trans retinoic acid, activation of MAPK1-mediated phosphorylation and recruitment to PML bodies with subsequent sumoylation, suppresses OCT4 expression. Phosphorylated on several serine and threonine residues. Phosphorylation on Thr-220, stimulated by all-trans retinoic acid (atRA) mediates PML location and sumoylation in proliferating cells which then modulates its association with effector molecules, KAT2B and NRIP1. Phosphorylation on Ser-581 by PKC is important for protein stability and function as activator of RARB.

The protein localises to the nucleus. Its subcellular location is the PML body. Functionally, orphan nuclear receptor. Binds the IR7 element in the promoter of its own gene in an autoregulatory negative feedback mechanism. Primarily repressor of a broad range of genes. Binds to hormone response elements (HREs) consisting of two 5'-AGGTCA-3' half site direct repeat consensus sequences. Together with NR2C2, forms the core of the DRED (direct repeat erythroid-definitive) complex that represses embryonic and fetal globin transcription. Also activator of OCT4 gene expression. May be involved in stem cell proliferation and differentiation. Mediator of retinoic acid-regulated preadipocyte proliferation. This Macaca fascicularis (Crab-eating macaque) protein is Nuclear receptor subfamily 2 group C member 1 (NR2C1).